The chain runs to 170 residues: UPF0260 protein RPE_1881 (170 aa).

Belongs to the UPF0260 family.

The chain is UPF0260 protein RPE_1881 from Rhodopseudomonas palustris (strain BisA53).